Reading from the N-terminus, the 31-residue chain is Photosystem I reaction center subunit XII (31 aa).

A helical transmembrane segment spans residues Thr-6–Leu-25.

It belongs to the PsaM family.

The protein resides in the cellular thylakoid membrane. This is Photosystem I reaction center subunit XII from Synechocystis sp. (strain ATCC 27184 / PCC 6803 / Kazusa).